The primary structure comprises 343 residues: Malate dehydrogenase, peroxisomal (343 aa).

NAD(+) is bound by residues 8–14 and D34; that span reads GASGGVG. Substrate is bound by residues R80 and R86. NAD(+) contacts are provided by residues N93 and 116 to 118; that span reads ISN. Substrate-binding residues include N118 and R152. The active-site Proton acceptor is the H187. Residue M237 participates in NAD(+) binding.

It belongs to the LDH/MDH superfamily. MDH type 1 family. In terms of assembly, homodimer.

Its subcellular location is the peroxisome. It carries out the reaction (S)-malate + NAD(+) = oxaloacetate + NADH + H(+). The sequence is that of Malate dehydrogenase, peroxisomal (MDH3) from Saccharomyces cerevisiae (strain ATCC 204508 / S288c) (Baker's yeast).